We begin with the raw amino-acid sequence, 254 residues long: Ribosomal RNA small subunit methyltransferase J (254 aa).

S-adenosyl-L-methionine-binding positions include R101–D102, E117–R118, S153–S154, and D171.

The protein belongs to the methyltransferase superfamily. RsmJ family.

Its subcellular location is the cytoplasm. The catalysed reaction is guanosine(1516) in 16S rRNA + S-adenosyl-L-methionine = N(2)-methylguanosine(1516) in 16S rRNA + S-adenosyl-L-homocysteine + H(+). Specifically methylates the guanosine in position 1516 of 16S rRNA. The chain is Ribosomal RNA small subunit methyltransferase J from Enterobacter sp. (strain 638).